The primary structure comprises 946 residues: Protein TMA108 (946 aa).

Ser-2 carries the post-translational modification N-acetylserine. 293–297 contributes to the substrate binding site; that stretch reads MAMEN. His-330 provides a ligand contact to Zn(2+). Residue Glu-331 is the Proton acceptor of the active site. Zn(2+) is bound by residues His-334 and Glu-353.

The protein belongs to the peptidase M1 family. In terms of assembly, associates with ribosomal complexes. It depends on Zn(2+) as a cofactor.

It localises to the cytoplasm. Functionally, putative zinc aminopeptidase which may be involved in ribosome biogenesis. The chain is Protein TMA108 (TMA108) from Saccharomyces cerevisiae (strain ATCC 204508 / S288c) (Baker's yeast).